The chain runs to 425 residues: Histidine--tRNA ligase (425 aa).

Belongs to the class-II aminoacyl-tRNA synthetase family. As to quaternary structure, homodimer.

It localises to the cytoplasm. It catalyses the reaction tRNA(His) + L-histidine + ATP = L-histidyl-tRNA(His) + AMP + diphosphate + H(+). This chain is Histidine--tRNA ligase, found in Pelotomaculum thermopropionicum (strain DSM 13744 / JCM 10971 / SI).